The chain runs to 421 residues: NADH-quinone oxidoreductase subunit F 2 (421 aa).

NAD(+) is bound at residue 53–62; sequence GRGGAGFPTG. 165–212 is an FMN binding site; sequence GAGAYICGEETAMLESLEGKRAQPRLKPPFPAVAGLYASPTVINNVET. Residues C342, C345, C348, and C388 each contribute to the [4Fe-4S] cluster site.

Belongs to the complex I 51 kDa subunit family. Requires FMN as cofactor. It depends on [4Fe-4S] cluster as a cofactor.

The catalysed reaction is a quinone + NADH + 5 H(+)(in) = a quinol + NAD(+) + 4 H(+)(out). NDH-1 shuttles electrons from NADH, via FMN and iron-sulfur (Fe-S) centers, to quinones in the respiratory chain. The immediate electron acceptor for the enzyme in this species is believed to be ubiquinone. Couples the redox reaction to proton translocation (for every two electrons transferred, four hydrogen ions are translocated across the cytoplasmic membrane), and thus conserves the redox energy in a proton gradient. This chain is NADH-quinone oxidoreductase subunit F 2 (nuoF2), found in Rhizobium meliloti (strain 1021) (Ensifer meliloti).